The sequence spans 458 residues: Argininosuccinate lyase (458 aa).

The protein belongs to the lyase 1 family. Argininosuccinate lyase subfamily.

The protein localises to the cytoplasm. It carries out the reaction 2-(N(omega)-L-arginino)succinate = fumarate + L-arginine. It functions in the pathway amino-acid biosynthesis; L-arginine biosynthesis; L-arginine from L-ornithine and carbamoyl phosphate: step 3/3. The protein is Argininosuccinate lyase of Salmonella newport (strain SL254).